The sequence spans 250 residues: MHLKTFSNLLVFVATVAAHGYVDNVTVNGILYTGYQPNSDPYYATPPPRIIRPVQGNGPITDLTLIDLQCGGYTEGGIVGSQPANLTAGPVAAGSTVSLRWTLWPDSHSGPVITYMAKCPAAGCSTYVPGTAAVWFKIQATGRIGNTTVWGDTPLKTAGNSYSYTIPSCLSAGSYIVRHEILALHAAWTYPGVQFYPSCHQIQVTGSGTSTGPSSKVAIPGVYKATDPGIVYDMYAVQPYTIPGPAVFTC.

Residues 1–18 (MHLKTFSNLLVFVATVAA) form the signal peptide. His-19 provides a ligand contact to Cu(2+). Asn-24 and Asn-85 each carry an N-linked (GlcNAc...) asparagine glycan. Disulfide bonds link Cys-70-Cys-199 and Cys-169-Cys-250. Residue His-108 coordinates Cu(2+). Asn-146 carries an N-linked (GlcNAc...) asparagine glycan. Residues His-185 and Gln-194 each contribute to the O2 site. Tyr-196 contacts Cu(2+).

This sequence belongs to the polysaccharide monooxygenase AA9 family. Cu(2+) is required as a cofactor.

The protein localises to the secreted. It carries out the reaction [(1-&gt;4)-beta-D-glucosyl]n+m + reduced acceptor + O2 = 4-dehydro-beta-D-glucosyl-[(1-&gt;4)-beta-D-glucosyl]n-1 + [(1-&gt;4)-beta-D-glucosyl]m + acceptor + H2O.. Its function is as follows. Lytic polysaccharide monooxygenase (LPMO) that depolymerizes crystalline and amorphous polysaccharides via the oxidation of scissile alpha- or beta-(1-4)-glycosidic bonds, yielding C1 and C4 oxidation products. Catalysis by LPMOs requires the reduction of the active-site copper from Cu(II) to Cu(I) by a reducing agent and H(2)O(2) or O(2) as a cosubstrate. This Botryotinia fuckeliana (strain B05.10) (Noble rot fungus) protein is AA9 family lytic polysaccharide monooxygenase F.